The primary structure comprises 347 residues: NADH-ubiquinone oxidoreductase chain 2 (347 aa).

The next 10 membrane-spanning stretches (helical) occupy residues 1–21 (MTPMTTLIMLFSLLLGTTLTL), 26–46 (WLLMWMGLEVSTLAIIPLLTY), 56–76 (AIKYFLTQATASMLLMFAASL), 96–116 (GIMTFALAMKLGLAPFHYWVP), 153–171 (ILLTLAISSTLLGGWNGLN), 178–198 (VMAYSSIAHMGWMVLIIIYFP), 199–219 (TLTTLNLTLYIMSTVALFTVF), 237–257 (APIMTLAIILLLLSLGGLPPL), 277–297 (IMATVLAITALLNLFFYMRII), and 326–346 (LPTLVILSTTLLPLTPMFITL).

Belongs to the complex I subunit 2 family. Core subunit of respiratory chain NADH dehydrogenase (Complex I) which is composed of 45 different subunits. Interacts with TMEM242.

It is found in the mitochondrion inner membrane. The enzyme catalyses a ubiquinone + NADH + 5 H(+)(in) = a ubiquinol + NAD(+) + 4 H(+)(out). In terms of biological role, core subunit of the mitochondrial membrane respiratory chain NADH dehydrogenase (Complex I) which catalyzes electron transfer from NADH through the respiratory chain, using ubiquinone as an electron acceptor. Essential for the catalytic activity and assembly of complex I. This Ornithorhynchus anatinus (Duckbill platypus) protein is NADH-ubiquinone oxidoreductase chain 2.